A 225-amino-acid polypeptide reads, in one-letter code: Nuclear protein UL4 homolog (225 aa).

Belongs to the alphaherpesvirinae HHV-1 UL4 family.

It localises to the host nucleus. In Equus caballus (Horse), this protein is Nuclear protein UL4 homolog.